A 418-amino-acid chain; its full sequence is MGKTLAEKIFSEHVGRDVKAGEIVLARVDIAMAQDGTGPLMINEFRELGFKEVKVPKAFLFIDHASPSPRKELSNSQKMMREFGKEMGVKVFDAGDGISHQILAEKYVKPGDLVAGADSHTCTAGGLGAFGTGMGSTDVAIIFGLGQNWFKVPETIKVVVNGKLQDGVYAKDIILEIARILGSDGATYKALEFHGSCIENMNVEDRLTISNMAVEVGAKAGLMPSDEKTREFLKKMGREEDFRELKADPDAVYETEIEIDATTLEPLVSLPHYVDNVRKVSEVEKEKIKIDQVFIGTCTNGRLQDLEIALKILEKHGKHPDVRLIVGPASRKVYMDALEKGIIKKFVELGAAVIPPGCGPCVGIHMGVLGDGERVLSTQNRNFKGRMGNPNAEIYLASPATAAATAVTGYITDPRRFI.

[4Fe-4S] cluster is bound by residues Cys298, Cys358, and Cys361.

The protein belongs to the aconitase/IPM isomerase family. LeuC type 2 subfamily. As to quaternary structure, heterodimer of LeuC and LeuD. It depends on [4Fe-4S] cluster as a cofactor.

It carries out the reaction (2R,3S)-3-isopropylmalate = (2S)-2-isopropylmalate. The protein operates within amino-acid biosynthesis; L-leucine biosynthesis; L-leucine from 3-methyl-2-oxobutanoate: step 2/4. Catalyzes the isomerization between 2-isopropylmalate and 3-isopropylmalate, via the formation of 2-isopropylmaleate. In Thermotoga maritima (strain ATCC 43589 / DSM 3109 / JCM 10099 / NBRC 100826 / MSB8), this protein is 3-isopropylmalate dehydratase large subunit 1.